The sequence spans 462 residues: UDP-N-acetylmuramoylalanine--D-glutamate ligase (462 aa).

Residue 125–131 (GSDGKTT) coordinates ATP.

It belongs to the MurCDEF family.

It is found in the cytoplasm. It catalyses the reaction UDP-N-acetyl-alpha-D-muramoyl-L-alanine + D-glutamate + ATP = UDP-N-acetyl-alpha-D-muramoyl-L-alanyl-D-glutamate + ADP + phosphate + H(+). It functions in the pathway cell wall biogenesis; peptidoglycan biosynthesis. In terms of biological role, cell wall formation. Catalyzes the addition of glutamate to the nucleotide precursor UDP-N-acetylmuramoyl-L-alanine (UMA). This chain is UDP-N-acetylmuramoylalanine--D-glutamate ligase, found in Clostridium acetobutylicum (strain ATCC 824 / DSM 792 / JCM 1419 / IAM 19013 / LMG 5710 / NBRC 13948 / NRRL B-527 / VKM B-1787 / 2291 / W).